The following is a 266-amino-acid chain: Transcription regulator FGM4 (266 aa).

The segment at 17 to 36 is disordered; it reads KTQNRLAKRKSRIHAGKQQG. The span at 18–31 shows a compositional bias: basic residues; sequence TQNRLAKRKSRIHA. ANK repeat units follow at residues 183–212 and 216–245; these read KPGSPLHIASAMGHLKVVKTLITYGANVNE and AGYSPIHYATRNNHTAIVALLLEKGADWSY.

It is found in the nucleus. In terms of biological role, transcription regulator; part of the Fg3_54/C64 gene cluster that mediates the biosynthesis of the octapeptide fusaoctaxin A, a virulence factor that is required for cell-to-cell invasiveness of plant host. Positively regulates the expression the Fg3_54/C64 gene cluster. This is Transcription regulator FGM4 from Gibberella zeae (strain ATCC MYA-4620 / CBS 123657 / FGSC 9075 / NRRL 31084 / PH-1) (Wheat head blight fungus).